We begin with the raw amino-acid sequence, 195 residues long: UDP-N-acetylbacillosamine N-acetyltransferase (195 aa).

Residues 13–15 (SGH), 35–36 (DD), and Gly-56 contribute to the substrate site. His-125 functions as the Proton acceptor in the catalytic mechanism. 3 residues coordinate acetyl-CoA: His-134, Ile-155, and Gly-173.

It belongs to the transferase hexapeptide repeat family. As to quaternary structure, homotrimer.

The enzyme catalyses UDP-N-acetylbacillosamine + acetyl-CoA = UDP-N,N'-diacetylbacillosamine + CoA + H(+). It functions in the pathway protein modification; protein glycosylation. In terms of biological role, acetyltransferase that modifies the UDP-4-amino-sugar to form UDP-N,N'-diacetylbacillosamine in the N-linked protein glycosylation pathway. The polypeptide is UDP-N-acetylbacillosamine N-acetyltransferase (pglD) (Campylobacter jejuni subsp. jejuni serotype O:2 (strain ATCC 700819 / NCTC 11168)).